The primary structure comprises 133 residues: Holo-[acyl-carrier-protein] synthase (133 aa).

Positions 8 and 58 each coordinate Mg(2+).

This sequence belongs to the P-Pant transferase superfamily. AcpS family. It depends on Mg(2+) as a cofactor.

It is found in the cytoplasm. It carries out the reaction apo-[ACP] + CoA = holo-[ACP] + adenosine 3',5'-bisphosphate + H(+). Its function is as follows. Transfers the 4'-phosphopantetheine moiety from coenzyme A to a Ser of acyl-carrier-protein. The sequence is that of Holo-[acyl-carrier-protein] synthase from Sphingopyxis alaskensis (strain DSM 13593 / LMG 18877 / RB2256) (Sphingomonas alaskensis).